An 833-amino-acid polypeptide reads, in one-letter code: Leucine--tRNA ligase (833 aa).

The 'HIGH' region signature appears at 41 to 52 (PYPSGAGLHVGH). The short motif at 610–614 (KMSKS) is the 'KMSKS' region element. Lys-613 is a binding site for ATP.

Belongs to the class-I aminoacyl-tRNA synthetase family.

The protein resides in the cytoplasm. It carries out the reaction tRNA(Leu) + L-leucine + ATP = L-leucyl-tRNA(Leu) + AMP + diphosphate. In Streptococcus pneumoniae (strain Hungary19A-6), this protein is Leucine--tRNA ligase.